We begin with the raw amino-acid sequence, 115 residues long: Non-specific lipid-transfer protein Cw18 (115 aa).

A signal peptide spans 1–25 (MARTAATKLALVALVAAMLLVAADA). 4 disulfide bridges follow: cysteine 29–cysteine 77, cysteine 39–cysteine 54, cysteine 55–cysteine 97, and cysteine 75–cysteine 111.

The protein belongs to the plant LTP family. Highly expressed in leaves and coleoptiles. No expression in roots.

Plant non-specific lipid-transfer proteins transfer phospholipids as well as galactolipids across membranes. May play a role in wax or cutin deposition in the cell walls of expanding epidermal cells and certain secretory tissues. This chain is Non-specific lipid-transfer protein Cw18 (CW18), found in Hordeum vulgare (Barley).